Here is a 194-residue protein sequence, read N- to C-terminus: MDFEQLLDKSLNKVREEIKTELSKSLDEAIKLLNEGHTKIIQEYTQRINELITKTKEEIEGEKARLEVENKRTLLVEKEYWINKVYERVLEKIGEVVKTKEYKDAIQSILNKEIKEMEGEKITVYCSPNDKSTVEKVVGNNKNVTIKTDDKMLGGIRIYYEGSGLTRDFSLKLILDQVFDSMRGKISDMLFGGK.

It belongs to the V-ATPase E subunit family. Has multiple subunits with at least A(3), B(3), C, D, E, F, H, I and proteolipid K(x).

The protein localises to the cell membrane. Component of the A-type ATP synthase that produces ATP from ADP in the presence of a proton gradient across the membrane. The chain is A-type ATP synthase subunit E from Saccharolobus islandicus (strain M.16.27) (Sulfolobus islandicus).